Here is a 1105-residue protein sequence, read N- to C-terminus: Protein phosphatase 1 regulatory subunit 26 (1105 aa).

4 disordered regions span residues 228-382, 444-468, 504-526, and 589-748; these read LNDK…NKLA, QSTY…DSLV, TSPE…AKAM, and LNRG…DSDD. Residues 275–285 are compositionally biased toward basic and acidic residues; the sequence is LLRKHASDSKL. A compositionally biased stretch (low complexity) spans 306–317; that stretch reads TKTSSPSPKSTP. Residues 359-368 show a composition bias toward polar residues; it reads SPTSANSLTH. Residues 451–460 are compositionally biased toward pro residues; that stretch reads TEPPPPPPEP. Residues 504-516 show a composition bias toward polar residues; it reads TSPELGSQSSKLS. A compositionally biased stretch (low complexity) spans 602 to 612; sequence SYSSGDKSSSL. The segment covering 628-647 has biased composition (basic residues); sequence SKRKYKKRPKDGKSQCKKRV. Basic and acidic residues predominate over residues 686 to 701; that stretch reads NSLEKSKKRREEKAVE. Positions 705–715 are enriched in polar residues; sequence PSCSSSPQGNK. Residues 733–742 show a composition bias toward basic and acidic residues; the sequence is RALDDAHESS.

Its subcellular location is the nucleus. The protein resides in the nucleolus. Functionally, may inhibit phosphatase activity of protein phosphatase 1 (PP1) complexes. May positively regulate cell proliferation. This is Protein phosphatase 1 regulatory subunit 26 (ppp1r26) from Xenopus laevis (African clawed frog).